The chain runs to 568 residues: Probable asparagine--tRNA ligase, cytoplasmic (568 aa).

This sequence belongs to the class-II aminoacyl-tRNA synthetase family.

It is found in the cytoplasm. The catalysed reaction is tRNA(Asn) + L-asparagine + ATP = L-asparaginyl-tRNA(Asn) + AMP + diphosphate + H(+). In terms of biological role, cytosolic asparaginyl-tRNA synthetase which catalyzes the specific attachment of asparagine to its cognate tRNA. The sequence is that of Probable asparagine--tRNA ligase, cytoplasmic (nrs1) from Schizosaccharomyces pombe (strain 972 / ATCC 24843) (Fission yeast).